We begin with the raw amino-acid sequence, 312 residues long: MSYASEVKKELTGITVHEKNARAELMALIRMNGSIGLANHAMILNVQTESPAIARRIYSLIKQLYKVESDILVRKKMKLKKNNTYVVRLRHHVQEILGDLAILDGFQIKERVPLDLLTDDLMIRSYLRGAFLAGGSVNNPETSRYHLEIYSLYEEHNEMIAEMINRYDLNARTTNRRSGYIVYLKEAEKIANFLQLIGATTSMLEFENIRIVRDMRNSVNRLVNCENANMDKVANAANRQVENIMLIEATVGLSSLPEKLRAIAETRLAHQEVSLKELGTLVPGGPISKSGVNHRLRKLNAYADELRQGKAI.

Residues 274–308 constitute a DNA-binding region (H-T-H motif); the sequence is SLKELGTLVPGGPISKSGVNHRLRKLNAYADELRQ.

This sequence belongs to the WhiA family.

Functionally, involved in cell division and chromosome segregation. This Limosilactobacillus fermentum (strain NBRC 3956 / LMG 18251) (Lactobacillus fermentum) protein is Probable cell division protein WhiA.